A 143-amino-acid polypeptide reads, in one-letter code: Large ribosomal subunit protein uL15 (143 aa).

The span at Met-1 to Gly-13 shows a compositional bias: basic residues. A disordered region spans residues Met-1–Gly-39. Residues Gly-29–Gly-38 are compositionally biased toward gly residues.

The protein belongs to the universal ribosomal protein uL15 family. Part of the 50S ribosomal subunit.

Functionally, binds to the 23S rRNA. The protein is Large ribosomal subunit protein uL15 of Methanocaldococcus jannaschii (strain ATCC 43067 / DSM 2661 / JAL-1 / JCM 10045 / NBRC 100440) (Methanococcus jannaschii).